The primary structure comprises 506 residues: Light-independent protochlorophyllide reductase subunit B (506 aa).

Residue Asp-36 participates in [4Fe-4S] cluster binding. The active-site Proton donor is Asp-279. Substrate is bound at residue 414 to 415; sequence GL.

The protein belongs to the ChlB/BchB/BchZ family. In terms of assembly, protochlorophyllide reductase is composed of three subunits; BchL, BchN and BchB. Forms a heterotetramer of two BchB and two BchN subunits. [4Fe-4S] cluster serves as cofactor.

It catalyses the reaction chlorophyllide a + oxidized 2[4Fe-4S]-[ferredoxin] + 2 ADP + 2 phosphate = protochlorophyllide a + reduced 2[4Fe-4S]-[ferredoxin] + 2 ATP + 2 H2O. It participates in porphyrin-containing compound metabolism; bacteriochlorophyll biosynthesis (light-independent). In terms of biological role, component of the dark-operative protochlorophyllide reductase (DPOR) that uses Mg-ATP and reduced ferredoxin to reduce ring D of protochlorophyllide (Pchlide) to form chlorophyllide a (Chlide). This reaction is light-independent. The NB-protein (BchN-BchB) is the catalytic component of the complex. This is Light-independent protochlorophyllide reductase subunit B from Methylobacterium sp. (strain 4-46).